Here is a 411-residue protein sequence, read N- to C-terminus: Methylthioribose-1-phosphate isomerase (411 aa).

Serine 2 is modified (N-acetylserine). The Proton donor role is filled by aspartate 280. Phosphoserine is present on serine 351.

Belongs to the eIF-2B alpha/beta/delta subunits family. MtnA subfamily. In terms of assembly, homodimer.

The protein resides in the cytoplasm. It localises to the nucleus. The catalysed reaction is 5-(methylsulfanyl)-alpha-D-ribose 1-phosphate = 5-(methylsulfanyl)-D-ribulose 1-phosphate. The protein operates within amino-acid biosynthesis; L-methionine biosynthesis via salvage pathway; L-methionine from S-methyl-5-thio-alpha-D-ribose 1-phosphate: step 1/6. Functionally, catalyzes the interconversion of methylthioribose-1-phosphate (MTR-1-P) into methylthioribulose-1-phosphate (MTRu-1-P). This chain is Methylthioribose-1-phosphate isomerase, found in Saccharomyces cerevisiae (strain RM11-1a) (Baker's yeast).